The sequence spans 417 residues: Argininosuccinate synthase (417 aa).

8-16 contributes to the ATP binding site; the sequence is AYSGGLDTS. Y87 contributes to the L-citrulline binding site. Position 117 (G117) interacts with ATP. Residues T119, N123, and D124 each coordinate L-aspartate. N123 is a binding site for L-citrulline. 4 residues coordinate L-citrulline: R127, S175, E259, and Y271.

This sequence belongs to the argininosuccinate synthase family. Type 1 subfamily. In terms of assembly, homotetramer.

Its subcellular location is the cytoplasm. The enzyme catalyses L-citrulline + L-aspartate + ATP = 2-(N(omega)-L-arginino)succinate + AMP + diphosphate + H(+). It functions in the pathway amino-acid biosynthesis; L-arginine biosynthesis; L-arginine from L-ornithine and carbamoyl phosphate: step 2/3. The polypeptide is Argininosuccinate synthase (Clavibacter sepedonicus (Clavibacter michiganensis subsp. sepedonicus)).